We begin with the raw amino-acid sequence, 348 residues long: Anthranilate phosphoribosyltransferase (348 aa).

Residues Gly-89, Gly-92–Asp-93, Thr-97, Asn-99–Thr-102, Lys-117–Ser-125, and Ser-129 contribute to the 5-phospho-alpha-D-ribose 1-diphosphate site. Gly-89 lines the anthranilate pocket. Position 101 (Ser-101) interacts with Mg(2+). Asn-120 lines the anthranilate pocket. Arg-175 contacts anthranilate. Residues Asp-233 and Glu-234 each contribute to the Mg(2+) site.

It belongs to the anthranilate phosphoribosyltransferase family. Homodimer. Mg(2+) is required as a cofactor.

It carries out the reaction N-(5-phospho-beta-D-ribosyl)anthranilate + diphosphate = 5-phospho-alpha-D-ribose 1-diphosphate + anthranilate. It functions in the pathway amino-acid biosynthesis; L-tryptophan biosynthesis; L-tryptophan from chorismate: step 2/5. Catalyzes the transfer of the phosphoribosyl group of 5-phosphorylribose-1-pyrophosphate (PRPP) to anthranilate to yield N-(5'-phosphoribosyl)-anthranilate (PRA). The chain is Anthranilate phosphoribosyltransferase from Shewanella putrefaciens (strain CN-32 / ATCC BAA-453).